The following is a 589-amino-acid chain: MTGEITILYGSETGNAEEYAKYLKQRLRSYNLKPINLASLDDYPLKRLVTHTSYLIIICSTTGQGEIPRNGKKFMKFILKKKLPSDLFQHLQLTTFGVGDSSYVKYNYAIKKIHTRLMQLGCQLLSPRCEADEISPEGVDGYYIEWEAELIAALLNKFPSASKISSEAVPMPEYRISVSKSDTTIDPKEVIDNPIVSRLGKDGLKLGTVLENNRLTSSNHFQDVRDFKFSSNGLNYLPGDTVSLFPCNFDEDVDALLQSQPQWLKIADKPLNLKNFPHLEGGFADILTLRTLFKYHLDIMSIPRRSFFALLWHFVDPSTEDGEREQEKLKEFGSLDEPEELYDYANRPRRSILETLLEFENNLTIPVSYILDLFPLIRPRMFSIASCPSSKEVELVVAIVEYKTIIRKIRRGVCTRWLKNLKPGDQFLFSIQRSSFKYKDDNSPIIMVAPGTGIAPMKSLIDEVIQNNSKQELYLFFGCRFKEKDNLIESFWHGNENQNLHLVSAYSRDSNSKYRYVQDALFAHSELIGKLLIEQNAKVFVCGSSGKMPREVKITFVEIVKKFTGMDEGDAQKYIIGLEDNGRYKEDAW.

In terms of domain architecture, Flavodoxin-like spans isoleucine 5–isoleucine 151. FMN-binding positions include serine 11–alanine 16, serine 60–glycine 63, valine 98–asparagine 107, and glutamate 133. The region spanning aspartate 202 to lysine 439 is the FAD-binding FR-type domain. FAD contacts are provided by residues arginine 349, arginine 380 to serine 383, and glycine 412 to threonine 415. NADP(+)-binding positions include threonine 452 and serine 507–arginine 508. Position 589 (tryptophan 589) interacts with FAD.

Belongs to the NADPH-dependent diflavin oxidoreductase NDOR1 family. It in the N-terminal section; belongs to the flavodoxin family. This sequence in the C-terminal section; belongs to the flavoprotein pyridine nucleotide cytochrome reductase family. Interacts with DRE2; as part of the cytosolic iron-sulfur (Fe-S) protein assembly (CIA) machinery. The cofactor is FAD. It depends on FMN as a cofactor.

Its subcellular location is the cytoplasm. The protein localises to the mitochondrion. It catalyses the reaction 2 oxidized [2Fe-2S]-[protein] + NADPH = 2 reduced [2Fe-2S]-[protein] + NADP(+) + H(+). Functionally, NADPH-dependent reductase which is a central component of the cytosolic iron-sulfur (Fe-S) protein assembly (CIA) machinery. Transfers electrons from NADPH via its FAD and FMN prosthetic groups to the [2Fe-2S] cluster of DRE2, another key component of the CIA machinery. In turn, this reduced cluster provides electrons for assembly of cytosolic iron-sulfur cluster proteins. Positively controls H(2)O(2)-induced cell death. This chain is NADPH-dependent diflavin oxidoreductase 1, found in Candida albicans (strain SC5314 / ATCC MYA-2876) (Yeast).